The primary structure comprises 307 residues: Aspartate carbamoyltransferase catalytic subunit (307 aa).

2 residues coordinate carbamoyl phosphate: Arg56 and Thr57. Lys84 provides a ligand contact to L-aspartate. Arg106, His136, and Gln139 together coordinate carbamoyl phosphate. Positions 169 and 221 each coordinate L-aspartate. Residues Ala262 and Pro263 each coordinate carbamoyl phosphate.

This sequence belongs to the aspartate/ornithine carbamoyltransferase superfamily. ATCase family. In terms of assembly, heterododecamer (2C3:3R2) of six catalytic PyrB chains organized as two trimers (C3), and six regulatory PyrI chains organized as three dimers (R2).

The catalysed reaction is carbamoyl phosphate + L-aspartate = N-carbamoyl-L-aspartate + phosphate + H(+). It participates in pyrimidine metabolism; UMP biosynthesis via de novo pathway; (S)-dihydroorotate from bicarbonate: step 2/3. Functionally, catalyzes the condensation of carbamoyl phosphate and aspartate to form carbamoyl aspartate and inorganic phosphate, the committed step in the de novo pyrimidine nucleotide biosynthesis pathway. This Streptococcus pneumoniae (strain 70585) protein is Aspartate carbamoyltransferase catalytic subunit.